The primary structure comprises 2883 residues: Desmoplakin (2883 aa).

The segment at 1–21 (MSCNGGSHPRINTLGRMTRAE) is disordered. An interaction with PKP1, JUP, PKP2 region spans residues 1 to 596 (MSCNGGSHPR…DYMKTIEDLE (596 aa)). Residues 1–1068 (MSCNGGSHPR…ANSENCNKNK (1068 aa)) are globular 1. The residue at position 22 (S22) is a Phosphoserine. T59 carries the phosphothreonine modification. Position 65 is a phosphoserine (S65). Position 68 is a phosphotyrosine (Y68). At T73 the chain carries Phosphothreonine. Phosphoserine occurs at positions 177, 178, and 188. Spectrin repeat units follow at residues 190–283 (SGWD…HLRQ) and 284–387 (LQNI…LKEN). One copy of the Spectrin 3a repeat lies at 388-458 (AAYFQFFEEA…NLVNKSKKIV (71 aa)). The SH3 domain maps to 470–527 (NKPIILRALCDYKQDQKIVHKGDECILKDNNERSKWYVTGPGGVDMLVPSVGLIIPPP). A Spectrin 3b repeat occupies 528–557 (NPLAVDLSCKIEQYYEAILALWNQLYINMK). 3 Spectrin repeats span residues 558 to 639 (SLVS…IQLP), 666 to 781 (VIET…SLCS), and 782 to 895 (VRAL…DLEK). The stretch at 1034–1956 (KSLEDLKLKN…LQKEIEKLRQ (923 aa)) forms a coiled coil. The segment at 1069–1957 (FLDQNLQKYQ…QKEIEKLRQR (889 aa)) is central fibrous rod domain. Phosphoserine is present on residues S1670, S1720, and S2036. Residues 1958–2882 (PYGSHRETQT…YSFSSSSIGG (925 aa)) are globular 2. The interval 1972 to 2220 (TVDSSKLVFD…LLLSVQKRSM (249 aa)) is 4.5 X 38 AA tandem repeats (Domain A). Plectin repeat units follow at residues 2021-2057 (QPFL…PEST), 2058-2095 (VMLL…FDDR), 2096-2133 (QQIY…RETG), 2134-2171 (MRLL…RDLY), 2175-2209 (NDPR…PHTG), 2210-2245 (LLLL…PSTV), 2263-2300 (KDFL…PGTA), 2301-2338 (LELL…IEFK), 2339-2376 (EKLL…KGHG), 2377-2414 (IRLL…EELS), 2418-2452 (SDPS…EETG), 2468-2505 (SQKN…YDTF), 2519-2556 (TITG…RKFF), 2622-2659 (SDPL…SITG), 2660-2697 (QRLL…QDMA), 2736-2773 (QRFL…GRAA), and 2774-2811 (QRLQ…DITG). S2219, S2221, and S2237 each carry phosphoserine. Residues 2256–2458 (DEVGERIKDF…EETGLCLLPL (203 aa)) form a 4.5 X 38 AA tandem repeats (Domain B) region. Q2492 carries the Omega-hydroxyceramide glutamate ester lipid modification. The segment at 2621 to 2833 (LSDPLEESSP…GLPSPYNMSA (213 aa)) is 4.5 X 38 AA tandem repeats (Domain C). 2 positions are modified to phosphoserine: S2822 and S2827. The interval 2822-2883 (SKGLPSPYNM…SFSSSSIGGY (62 aa)) is disordered. Residue Y2829 is modified to Phosphotyrosine. A phosphoserine mark is found at S2832 and S2836. Residues 2835 to 2858 (GSRSGSRSGSRSGSRSGSRSGSRR) form a 6 X 4 AA tandem repeats of G-S-R-[SR] region. Positions 2835–2858 (GSRSGSRSGSRSGSRSGSRSGSRR) are enriched in low complexity. 2 positions are modified to omega-N-methylarginine: R2837 and R2858. At S2860 the chain carries Phosphoserine. T2864 is modified (phosphothreonine). Residues 2867–2883 (SSYSYSYSFSSSSIGGY) show a composition bias toward low complexity. A Phosphoserine modification is found at S2879.

The protein belongs to the plakin or cytolinker family. In terms of assembly, homodimer. Interacts with COL17A1 (via cytoplasmic region). Interacts with DSC2. Interacts with PKP1. Interacts with PKP2. Interacts weakly with TMEM65. Phosphorylation at Ser-2860 increases association with intermediate filament cytokeratin, potentially facilitating interaction between desmosome junctions and intermediate filament architecture. As to expression, expressed in undifferentiated keratinocytes of the epidermis at birth, expression increases as differentiation proceeds (at protein level). Abundantly expressed in the suprabasal layers and weakly in the basal layers of the outer hair root sheath (at protein level). Expressed at intercalated disks in cardiomyocytes (at protein level).

The protein resides in the cell junction. Its subcellular location is the desmosome. It localises to the cell membrane. The protein localises to the cytoplasm. Its function is as follows. Major high molecular weight protein of desmosomes. Regulates profibrotic gene expression in cardiomyocytes via activation of the MAPK14/p38 MAPK signaling cascade and increase in TGFB1 protein abundance. The chain is Desmoplakin from Mus musculus (Mouse).